Consider the following 351-residue polypeptide: Nuclear inhibitor of protein phosphatase 1 (351 aa).

Positions 1-142 (MAAAANSGSS…LPSAVKGDEK (142 aa)) are interaction with CDC5L, SF3B1 and MELK. Residues 49–101 (YLFGRNPDLCDFTIDHQSCSRVHAALVYHKHLKRVFLIDLNSTHGTFLGHIRL) form the FHA domain. The interval 143-224 (MGGEDDELKG…VDPSVGRFRN (82 aa)) is interaction with EED. T161 carries the post-translational modification Phosphothreonine; by CK2; in vitro. At S178 the chain carries Phosphoserine; by PKA; in vitro. 2 short sequence motifs (nuclear localization signal) span residues 185-209 (GNLDIQRPKRKRKNSRVTFSEDDEI) and 210-240 (INPEDVDPSVGRFRNMVQTAVVPVKKKRVEG). The tract at residues 191–200 (RPKRKRKNSR) is involved in PP-1 inhibition. Residue S199 is modified to Phosphoserine. Positions 200 to 203 (RVTF) are involved in PP-1 binding. Position 204 is a phosphoserine (S204). Residue S249 is modified to Phosphoserine. Y264 is subject to Phosphotyrosine. Residues 310–329 (AVNMNPAPNPAVYNPEAVNE) are interaction with EED. The interval 316–351 (APNPAVYNPEAVNEPKKKKYAKEAWPGKKPTPSLLI) is disordered. The interval 330–351 (PKKKKYAKEAWPGKKPTPSLLI) is RNA-binding. Residues 331–337 (KKKKYAK) form an involved in PP-1 inhibition region. Residue Y335 is modified to Phosphotyrosine.

As to quaternary structure, interacts with phosphorylated CDC5L, SF3B1 and MELK. Interacts with EED. Part of a complex consisting of PPP1R8, EED, HDAC2 and PP-1. Part of the spliceosome. Interacts with PPP1CA, PPP1CB and PPP1CC. Post-translationally, the N-terminus is blocked. Inactivated by phosphorylation on Ser-199 or Ser-204.

The protein localises to the nucleus. It is found in the nucleus speckle. Its function is as follows. Inhibitor subunit of the major nuclear protein phosphatase-1 (PP-1). It has RNA-binding activity but does not cleave RNA and may target PP-1 to RNA-associated substrates. May also be involved in pre-mRNA splicing. Binds DNA and might act as a transcriptional repressor. Seems to be required for cell proliferation. This Bos taurus (Bovine) protein is Nuclear inhibitor of protein phosphatase 1 (PPP1R8).